The chain runs to 287 residues: Prepilin leader peptidase/N-methyltransferase (287 aa).

The next 6 helical transmembrane spans lie at 10-30 (LGFP…NVVI), 101-121 (ISIQ…ASVW), 125-145 (FGWQ…MSGI), 177-197 (KPAL…WWLF), 226-246 (ILPI…IWLF), and 253-273 (ATPI…FFWG).

It belongs to the peptidase A24 family.

Its subcellular location is the cell inner membrane. The catalysed reaction is Typically cleaves a -Gly-|-Phe- bond to release an N-terminal, basic peptide of 5-8 residues from type IV prepilin, and then N-methylates the new N-terminal amino group, the methyl donor being S-adenosyl-L-methionine.. In terms of biological role, plays an essential role in type IV pili and type II pseudopili formation by proteolytically removing the leader sequence from substrate proteins and subsequently monomethylating the alpha-amino group of the newly exposed N-terminal phenylalanine. The chain is Prepilin leader peptidase/N-methyltransferase (xpsO) from Xanthomonas campestris pv. campestris (strain ATCC 33913 / DSM 3586 / NCPPB 528 / LMG 568 / P 25).